We begin with the raw amino-acid sequence, 452 residues long: Heat shock protein 83 (452 aa).

Arginine 124 contacts ATP. A TPR repeat-binding motif is present at residues 448 to 452 (MEQVD).

It belongs to the heat shock protein 90 family. As to quaternary structure, homodimer.

Its subcellular location is the cytoplasm. Functionally, molecular chaperone that promotes the maturation, structural maintenance and proper regulation of specific target proteins involved for instance in cell cycle control and signal transduction. Undergoes a functional cycle that is linked to its ATPase activity. This cycle probably induces conformational changes in the client proteins, thereby causing their activation. Interacts dynamically with various co-chaperones that modulate its substrate recognition, ATPase cycle and chaperone function. The protein is Heat shock protein 83 (HSP83) of Leishmania donovani.